Here is a 254-residue protein sequence, read N- to C-terminus: Homeobox protein BarH-like 1 (254 aa).

A disordered region spans residues methionine 1–aspartate 20. Residues glycine 142 to valine 201 constitute a DNA-binding region (homeobox). Residues glycine 204–aspartate 254 are disordered. The span at glutamate 230–aspartate 254 shows a compositional bias: basic and acidic residues.

The protein belongs to the BAR homeobox family. In terms of tissue distribution, widely expressed. Expressed at higher levels in testis and heart. Detected in craniofacial tissue and adult iris, but not in lymphocytes, fibroblasts, choroid retina, retinal pigment epithelium, kidney, or fetal liver.

The protein resides in the nucleus. Transcription factor, which is involved in craniofacial development, in odontogenesis and in stomach organogenesis. May have a role in the differentiation of molars from incisors. Plays a role in suppressing endodermal Wnt activity. Binds to a regulatory module of the NCAM promoter. The protein is Homeobox protein BarH-like 1 (BARX1) of Homo sapiens (Human).